The chain runs to 150 residues: Flagellar assembly factor FliW (150 aa).

It belongs to the FliW family. In terms of assembly, interacts with translational regulator CsrA and flagellin(s).

The protein resides in the cytoplasm. Acts as an anti-CsrA protein, binds CsrA and prevents it from repressing translation of its target genes, one of which is flagellin. Binds to flagellin and participates in the assembly of the flagellum. The chain is Flagellar assembly factor FliW from Leptospira borgpetersenii serovar Hardjo-bovis (strain JB197).